The sequence spans 445 residues: Phosphoglucosamine mutase (445 aa).

The Phosphoserine intermediate role is filled by S102. Mg(2+) is bound by residues S102, D241, D243, and D245. Residue S102 is modified to Phosphoserine.

It belongs to the phosphohexose mutase family. Mg(2+) serves as cofactor. Activated by phosphorylation.

It catalyses the reaction alpha-D-glucosamine 1-phosphate = D-glucosamine 6-phosphate. Its function is as follows. Catalyzes the conversion of glucosamine-6-phosphate to glucosamine-1-phosphate. This is Phosphoglucosamine mutase from Citrobacter koseri (strain ATCC BAA-895 / CDC 4225-83 / SGSC4696).